Here is a 173-residue protein sequence, read N- to C-terminus: C-phycocyanin beta subunit (173 aa).

Residue Asn73 is modified to N4-methylasparagine. The (2R,3E)-phycocyanobilin site is built by Cys83 and Cys154.

This sequence belongs to the phycobiliprotein family. In terms of assembly, heterodimer of an alpha and a beta subunit. Part of 2 PBS rod complexes, the conventional PBS rod and a photosystem I-specific CpcL-PBS rod. Contains two covalently linked bilin chromophores.

The protein localises to the cellular thylakoid membrane. Its function is as follows. Light-harvesting photosynthetic bile pigment-protein from the phycobiliprotein complex (phycobilisome, PBS). Phycocyanin is the major phycobiliprotein in the PBS rod. This is C-phycocyanin beta subunit (cpcB) from Nostoc sp. (strain PCC 7120 / SAG 25.82 / UTEX 2576).